We begin with the raw amino-acid sequence, 1320 residues long: Clustered mitochondria protein homolog (1320 aa).

Disordered stretches follow at residues 166–241, 552–582, and 683–708; these read QQLE…KQKM, YGSMDTPTNEEEEQQQKEENEENKNNNTKSI, and LKEKEERQKKEGIDPPTATARDEDVQ. The span at 185–194 shows a compositional bias: basic and acidic residues; sequence TEDKEEKETI. Basic residues predominate over residues 202 to 213; that stretch reads KKNKHHNKKGNK. 3 stretches are compositionally biased toward basic and acidic residues: residues 226-241, 565-575, and 683-695; these read NEEKLTPQQKERKQKM, QQQKEENEENK, and LKEKEERQKKEGI. One can recognise a Clu domain in the interval 379-649; it reads KTNRYDINKG…KATPRDPNYT (271 aa). 5 TPR repeats span residues 955–988, 997–1030, 1039–1072, 1081–1114, and 1123–1156; these read GLDLLEAGKTFFNQRKYELATELLGEALAIYHQV, GACFTHLAMLAYQNEQYDLAIEYQKNALVITEKT, VQAYTTLAVFCQRSGRYNESIGYMKHVLYLTDLL, ASIYTAIAAILEDTERFDLALEFLKQTLKHQEFL, and STTYHKMAIVCARATNFDDSIIHQKKSTDILEKE. The interval 1204 to 1320 is disordered; that stretch reads KADQFKKSQP…SKPNKKSSKN (117 aa). The span at 1237 to 1247 shows a compositional bias: basic residues; the sequence is KPKKSQSKKSK. Low complexity predominate over residues 1248-1311; sequence STNTTTTTNT…PTSSSAADSS (64 aa).

The protein belongs to the CLU family.

The protein resides in the cytoplasm. MRNA-binding protein involved in proper cytoplasmic distribution of mitochondria. The protein is Clustered mitochondria protein homolog of Dictyostelium discoideum (Social amoeba).